Consider the following 179-residue polypeptide: Inner membrane-spanning protein YciB (179 aa).

A run of 5 helical transmembrane segments spans residues isoleucine 22–valine 42, methionine 50–asparagine 70, tryptophan 76–methionine 96, leucine 121–leucine 141, and phenylalanine 149–isoleucine 169.

This sequence belongs to the YciB family.

The protein localises to the cell inner membrane. Functionally, plays a role in cell envelope biogenesis, maintenance of cell envelope integrity and membrane homeostasis. This Escherichia coli O127:H6 (strain E2348/69 / EPEC) protein is Inner membrane-spanning protein YciB.